The sequence spans 652 residues: Bifunctional protein ThiO/ThiG (652 aa).

Positions 1–366 are thiO; the sequence is MTRDIVIIGG…HYSRFQKQAS (366 aa). FAD is bound by residues 5-19 and 44-46; these read IVII…AIAV and AGM. Glu-52 provides a ligand contact to glycine. Val-173 contacts FAD. Positions 301 and 327 each coordinate glycine. 325-331 contributes to the FAD binding site; the sequence is HYRNGIL. The tract at residues 393–652 is thiG; sequence SLIIAGKSFH…ASSPVTGTIS (260 aa). The Schiff-base intermediate with DXP role is filled by Lys-494. 1-deoxy-D-xylulose 5-phosphate-binding positions include Gly-555, 581-582, and 603-604; these read AG and NS.

The protein in the N-terminal section; belongs to the DAO family. ThiO subfamily. This sequence in the C-terminal section; belongs to the ThiG family. Interacts with ThiH and ThiS. FAD is required as a cofactor.

It localises to the cytoplasm. It carries out the reaction glycine + O2 + H2O = glyoxylate + H2O2 + NH4(+). It catalyses the reaction [ThiS sulfur-carrier protein]-C-terminal-Gly-aminoethanethioate + 2-iminoacetate + 1-deoxy-D-xylulose 5-phosphate = [ThiS sulfur-carrier protein]-C-terminal Gly-Gly + 2-[(2R,5Z)-2-carboxy-4-methylthiazol-5(2H)-ylidene]ethyl phosphate + 2 H2O + H(+). The protein operates within cofactor biosynthesis; thiamine diphosphate biosynthesis. Catalyzes the FAD-dependent oxidative deamination of glycine. Is essential for thiamine biosynthesis since the oxidation of glycine catalyzed by ThiO generates the glycine imine intermediate (dehydroglycine) required for the biosynthesis of the thiazole ring of thiamine pyrophosphate. In terms of biological role, catalyzes the rearrangement of 1-deoxy-D-xylulose 5-phosphate (DXP) to produce the thiazole phosphate moiety of thiamine. Sulfur is provided by the thiocarboxylate moiety of the carrier protein ThiS. In vitro, sulfur can be provided by H(2)S. In Trichormus variabilis (strain ATCC 29413 / PCC 7937) (Anabaena variabilis), this protein is Bifunctional protein ThiO/ThiG (thiO/thiG).